Reading from the N-terminus, the 44-residue chain is DNA-directed RNA polymerase subunit Rpo12 (44 aa).

The Zn(2+) site is built by Cys-8, Cys-22, and Cys-25.

The protein belongs to the archaeal Rpo12/eukaryotic RPC10 RNA polymerase subunit family. Part of the RNA polymerase complex. It depends on Zn(2+) as a cofactor.

The protein localises to the cytoplasm. It carries out the reaction RNA(n) + a ribonucleoside 5'-triphosphate = RNA(n+1) + diphosphate. DNA-dependent RNA polymerase (RNAP) catalyzes the transcription of DNA into RNA using the four ribonucleoside triphosphates as substrates. The protein is DNA-directed RNA polymerase subunit Rpo12 of Halobacterium salinarum (strain ATCC 29341 / DSM 671 / R1).